The following is a 930-amino-acid chain: A disintegrin and metalloproteinase with thrombospondin motifs 5 (930 aa).

Residues 1-21 (MRLEWAPLLLLLLLLSASCLS) form the signal peptide. Residues 22–261 (LAADSPAAAP…PQTWWRRRRR (240 aa)) constitute a propeptide that is removed on maturation. A compositionally biased stretch (low complexity) spans 31 to 53 (PAQDKTRQPQAAAAAAEPDQPQG). Disordered regions lie at residues 31-68 (PAQD…LAGQ) and 207-231 (ASCE…SRRR). The Cysteine switch motif lies at 207 to 214 (ASCETPAS). Cys-209 contacts Zn(2+). Residues 211–225 (TPASPSGPQESPSVH) are compositionally biased toward polar residues. Positions 267–476 (RQVELLLVAD…GHGNCLLDLP (210 aa)) constitute a Peptidase M12B domain. 8 disulfide bridges follow: Cys-342/Cys-394, Cys-371/Cys-376, Cys-388/Cys-471, Cys-426/Cys-455, Cys-497/Cys-519, Cys-508/Cys-529, Cys-514/Cys-548, and Cys-542/Cys-553. His-410 lines the Zn(2+) pocket. Glu-411 is a catalytic residue. Residues His-414 and His-420 each contribute to the Zn(2+) site. In terms of domain architecture, Disintegrin spans 485–566 (ELPGQTYDAT…TKKKYYSTSS (82 aa)). Asn-498 carries an N-linked (GlcNAc...) asparagine glycan. In terms of domain architecture, TSP type-1 1 spans 567–622 (HGNWGSWGPWGQCSRSCGGGVQFAYRHCNNPAPRNSGRYCTGKRAIYRSCSVTPCP). C-linked (Man) tryptophan glycosylation is found at Trp-570 and Trp-573. 3 disulfide bridges follow: Cys-579–Cys-616, Cys-583–Cys-621, and Cys-594–Cys-606. Ser-582 carries O-linked (Fuc...) serine glycosylation. Residues Asn-728, Asn-802, and Asn-807 are each glycosylated (N-linked (GlcNAc...) asparagine). Residues 732 to 874 (TKIIGTFNKK…HGSNKVGPHS (143 aa)) form a spacer region. Residues 875–929 (TQLQWVTGPWLACSRTCDTGWHTRTVQCQDGNRKLAKGCLLSQRPSAFKQCLLKK) enclose the TSP type-1 2 domain.

Zn(2+) serves as cofactor. In terms of processing, the precursor is cleaved by furin and PCSK7 outside of the cell. Post-translationally, glycosylated. Can be O-fucosylated by POFUT2 on a serine or a threonine residue found within the consensus sequence C1-X(2)-(S/T)-C2-G of the TSP type-1 repeat domains where C1 and C2 are the first and second cysteine residue of the repeat, respectively. Fucosylated repeats can then be further glycosylated by the addition of a beta-1,3-glucose residue by the glucosyltransferase, B3GALTL. Fucosylation mediates the efficient secretion of ADAMTS family members. Can also be C-glycosylated with one or two mannose molecules on tryptophan residues within the consensus sequence W-X-X-W of the TPRs, and N-glycosylated. These other glycosylations can also facilitate secretion. In terms of tissue distribution, expressed in skeletal muscle.

The protein localises to the secreted. The protein resides in the extracellular space. Its subcellular location is the extracellular matrix. Metalloproteinase that plays an important role in connective tissue organization, development, inflammation and cell migration. Extracellular matrix (ECM) degrading enzyme that shows proteolytic activity toward the hyalectan group of chondroitin sulfate proteoglycans (CSPGs) including ACAN, VCAN, BCAN and NCAN. Cleavage within the hyalectans occurs at Glu-Xaa recognition motifs. Plays a role in embryonic development, including limb and cardiac morphogenesis, and skeletal muscle development through its VCAN remodeling properties. Cleaves VCAN in the pericellular matrix surrounding myoblasts, facilitating myoblast contact and fusion which is required for skeletal muscle development and regeneration. Participates in the development of brown adipose tissue and browning of white adipose tissue. Plays an important role for T-lymphocyte migration from draining lymph nodes following viral infection. The chain is A disintegrin and metalloproteinase with thrombospondin motifs 5 (Adamts5) from Mus musculus (Mouse).